We begin with the raw amino-acid sequence, 445 residues long: Probable D-serine dehydratase (445 aa).

N6-(pyridoxal phosphate)lysine is present on lysine 119.

Belongs to the serine/threonine dehydratase family. DsdA subfamily. Requires pyridoxal 5'-phosphate as cofactor.

The catalysed reaction is D-serine = pyruvate + NH4(+). The chain is Probable D-serine dehydratase from Pseudomonas putida (strain GB-1).